We begin with the raw amino-acid sequence, 663 residues long: Beta-galactosidase YesZ (663 aa).

Arg-107 serves as a coordination point for substrate. Cys-111 contributes to the Zn(2+) binding site. Asn-145 serves as a coordination point for substrate. Residue Glu-146 is the Proton donor of the active site. The Zn(2+) site is built by Cys-154, Cys-156, and Cys-159. Residue Glu-297 is the Nucleophile of the active site. 346-349 (EQPH) serves as a coordination point for substrate.

Belongs to the glycosyl hydrolase 42 family. Homotrimer.

The enzyme catalyses Hydrolysis of terminal non-reducing beta-D-galactose residues in beta-D-galactosides.. Functionally, may play a role in the degradation of rhamnogalacturonan derived from plant cell walls. The chain is Beta-galactosidase YesZ (yesZ) from Bacillus licheniformis (strain ATCC 14580 / DSM 13 / JCM 2505 / CCUG 7422 / NBRC 12200 / NCIMB 9375 / NCTC 10341 / NRRL NRS-1264 / Gibson 46).